The sequence spans 472 residues: Eukaryotic translation initiation factor 2 subunit 3, X-linked (472 aa).

Ala-2 bears the N-acetylalanine mark. Ser-16 bears the Phosphoserine mark. Positions 39 to 248 (QATINIGTIG…IVKKIPVPPR (210 aa)) constitute a tr-type G domain. Residues 48 to 55 (GHVAHGKS) are G1. Residue 51–56 (AHGKST) participates in GTP binding. A G2 region spans residues 76–80 (NITIK). The segment at 134-137 (DCPG) is G3. GTP contacts are provided by residues 190–193 (NKID) and 225–227 (SAQ). Positions 190–193 (NKID) are G4. The interval 225 to 227 (SAQ) is G5. Residues 457 to 469 (GQIRRGVTIKPTV) form an interacts with Cdc123 region.

This sequence belongs to the TRAFAC class translation factor GTPase superfamily. Classic translation factor GTPase family. EIF2G subfamily. In terms of assembly, eukaryotic translation initiation factor 2 eIF2 is a heterotrimeric complex composed of an alpha (EIF2S1), a beta (EIF2S2) and a gamma (EIF2S3) chain. eIF2 is member of the 43S pre-initiation complex (43S PIC). Interacts (via C-terminus) with CDC123; the interaction is direct. As to expression, widely expressed. In the brain, high mRNA levels are observed in specific regions, including the habenula, anterodorsal thalamic nucleus, hippocampus, hypothalamus, and cerebellum. Also expressed in the embryonic brain. There is a differential expression between males and females, which is tissue-specific. Females tend to have higher expression levels than males in the brain (cortex, hippocampus and paraventricular nucleus, but not in the habenula), as well as in other tissues. The up-regulation observed in females at the mRNA level may be due to the presence of 2 active copies of the gene.

It localises to the cytoplasm. The protein localises to the cytosol. It carries out the reaction GTP + H2O = GDP + phosphate + H(+). Its function is as follows. Member of the eIF2 complex that functions in the early steps of protein synthesis by forming a ternary complex with GTP and initiator tRNA. This complex binds to a 40S ribosomal subunit, followed by mRNA binding to form the 43S pre-initiation complex (43S PIC). Junction of the 60S ribosomal subunit to form the 80S initiation complex is preceded by hydrolysis of the GTP bound to eIF2 and release of an eIF2-GDP binary complex. In order for eIF2 to recycle and catalyze another round of initiation, the GDP bound to eIF2 must exchange with GTP by way of a reaction catalyzed by eIF-2B. Along with its paralog on chromosome Y, may contribute to spermatogenesis up to the round spermatid stage. This chain is Eukaryotic translation initiation factor 2 subunit 3, X-linked (Eif2s3x), found in Mus musculus (Mouse).